An 82-amino-acid chain; its full sequence is Small ribosomal subunit protein bS16 (82 aa).

It belongs to the bacterial ribosomal protein bS16 family.

The sequence is that of Small ribosomal subunit protein bS16 from Pectobacterium atrosepticum (strain SCRI 1043 / ATCC BAA-672) (Erwinia carotovora subsp. atroseptica).